Reading from the N-terminus, the 209-residue chain is Guanylate kinase (209 aa).

Residues 8 to 186 enclose the Guanylate kinase-like domain; that stretch reads GVLYIVSAPS…ALQDLVAITR (179 aa). 15–22 lines the ATP pocket; it reads APSGAGKT.

The protein belongs to the guanylate kinase family.

The protein localises to the cytoplasm. The enzyme catalyses GMP + ATP = GDP + ADP. Functionally, essential for recycling GMP and indirectly, cGMP. This chain is Guanylate kinase, found in Thiobacillus denitrificans (strain ATCC 25259 / T1).